A 595-amino-acid polypeptide reads, in one-letter code: TNF receptor-associated factor family protein DDB_G0272348 (595 aa).

The segment at 14–64 is disordered; it reads SFTNNNSNNNNNNNNNSNSNNNNNNNNNNINNNNNHNNNNKNNSNNKNEIN. Over residues 17–64 the composition is skewed to low complexity; sequence NNNSNNNNNNNNNSNSNNNNNNNNNNINNNNNHNNNNKNNSNNKNEIN. An RING-type; degenerate zinc finger spans residues 87-134; sequence CTICSDLLVNSFHADKFKAVQCKNGHYTTCLNCWEKHLEKKKNCIQCG. TRAF-type zinc fingers lie at residues 189–253 and 254–311; these read EHLK…INKE and SHNA…SKLS. Positions 348-410 form a coiled coil; that stretch reads LLNGQNKKIT…QQQQSQQQQQ (63 aa). The span at 409–440 shows a compositional bias: low complexity; that stretch reads QQSQQQQQSQQSQQNNNSNSHFINNNNNNINN. The tract at residues 409-450 is disordered; the sequence is QQSQQQQQSQQSQQNNNSNSHFINNNNNNINNVQMSDSPNGG. The segment covering 441–450 has biased composition (polar residues); sequence VQMSDSPNGG. One can recognise an MATH domain in the interval 456–584; the sequence is VYKNKWVISN…NDSITIEIEI (129 aa).

The protein belongs to the TNF receptor-associated factor family. A subfamily.

It localises to the cytoplasm. Probable adapter protein and signal transducer that links members of the tumor necrosis factor receptor family to different signaling pathways by association with the receptor cytoplasmic domain and kinases. This Dictyostelium discoideum (Social amoeba) protein is TNF receptor-associated factor family protein DDB_G0272348.